The chain runs to 180 residues: Ribulose bisphosphate carboxylase small subunit, chloroplastic (180 aa).

Residues 1–57 constitute a chloroplast transit peptide; that stretch reads MVSSMMVSSAATFTRASPAQSSMVAPFTGLKSASAFPVTRKPNADLSHLPSNGGRVQ.

This sequence belongs to the RuBisCO small chain family. As to quaternary structure, heterohexadecamer of 8 large and 8 small subunits.

It localises to the plastid. The protein resides in the chloroplast. Its function is as follows. RuBisCO catalyzes two reactions: the carboxylation of D-ribulose 1,5-bisphosphate, the primary event in carbon dioxide fixation, as well as the oxidative fragmentation of the pentose substrate. Both reactions occur simultaneously and in competition at the same active site. Although the small subunit is not catalytic it is essential for maximal activity. In Musa acuminata (Banana), this protein is Ribulose bisphosphate carboxylase small subunit, chloroplastic.